The following is a 450-amino-acid chain: Tubulin beta-2 chain (450 aa).

GTP contacts are provided by Gln-11, Glu-69, Ser-138, Gly-142, Thr-143, Gly-144, Asn-204, and Asn-226. Glu-69 lines the Mg(2+) pocket. The segment at 428-450 is disordered; it reads ATAEDDVDGYAEGEAGETYESEQ. The segment covering 429-450 has biased composition (acidic residues); the sequence is TAEDDVDGYAEGEAGETYESEQ.

This sequence belongs to the tubulin family. In terms of assembly, dimer of alpha and beta chains. A typical microtubule is a hollow water-filled tube with an outer diameter of 25 nm and an inner diameter of 15 nm. Alpha-beta heterodimers associate head-to-tail to form protofilaments running lengthwise along the microtubule wall with the beta-tubulin subunit facing the microtubule plus end conferring a structural polarity. Microtubules usually have 13 protofilaments but different protofilament numbers can be found in some organisms and specialized cells. Mg(2+) is required as a cofactor. In terms of processing, cleaved by caspase ced-3 in vitro.

It is found in the cytoplasm. It localises to the cytoskeleton. In terms of biological role, tubulin is the major constituent of microtubules, a cylinder consisting of laterally associated linear protofilaments composed of alpha- and beta-tubulin heterodimers. Microtubules grow by the addition of GTP-tubulin dimers to the microtubule end, where a stabilizing cap forms. Below the cap, tubulin dimers are in GDP-bound state, owing to GTPase activity of alpha-tubulin. Required for the normal dynamic behavior of the non-centrosomal microtubules in the epidermal syncytium. Involved in the redistribution of microtubule end-binding protein EB1/ebp-2 caused by wounding. Required to modulate expression in the epidermis of antimicrobial peptides, such as nlp-29, after wounding, or fungal infection. This chain is Tubulin beta-2 chain (tbb-2), found in Caenorhabditis elegans.